The sequence spans 180 residues: Small ribosomal subunit protein uS4 (180 aa).

In terms of domain architecture, S4 RNA-binding spans Arg-103–Val-174.

It belongs to the universal ribosomal protein uS4 family. In terms of assembly, part of the 30S ribosomal subunit. Contacts protein S5. The interaction surface between S4 and S5 is involved in control of translational fidelity.

One of the primary rRNA binding proteins, it binds directly to 16S rRNA where it nucleates assembly of the body of the 30S subunit. Functionally, with S5 and S12 plays an important role in translational accuracy. This chain is Small ribosomal subunit protein uS4, found in Thermococcus sibiricus (strain DSM 12597 / MM 739).